The sequence spans 860 residues: Leucine--tRNA ligase (860 aa).

Positions proline 42 to histidine 52 match the 'HIGH' region motif. The 'KMSKS' region motif lies at lysine 619–serine 623. ATP is bound at residue lysine 622.

The protein belongs to the class-I aminoacyl-tRNA synthetase family.

The protein resides in the cytoplasm. It carries out the reaction tRNA(Leu) + L-leucine + ATP = L-leucyl-tRNA(Leu) + AMP + diphosphate. The sequence is that of Leucine--tRNA ligase from Shigella boydii serotype 18 (strain CDC 3083-94 / BS512).